The sequence spans 183 residues: Seminal plasma protein BSP-30 kDa (183 aa).

The signal sequence occupies residues 1 to 25 (MAPLVGLFLIWAGASVFQQLHPVNG). Residues 23–47 (VNGGDIPDPGSKPTPPGMADELPTE) are disordered. Threonine 36, threonine 46, threonine 57, threonine 58, threonine 59, and threonine 64 each carry an O-linked (GalNAc...) threonine glycan. 2 consecutive Fibronectin type-II domains span residues 92-136 (FEGP…FCTE) and 137-183 (RDEP…WKYC). 4 disulfides stabilise this stretch: cysteine 97-cysteine 121, cysteine 111-cysteine 134, cysteine 142-cysteine 168, and cysteine 156-cysteine 183.

The protein belongs to the seminal plasma protein family.

The protein resides in the secreted. Its function is as follows. Binds to spermatozoa upon ejaculation and may play a role in sperm capacitation. Displays heparin-, gelatin- and phospholipid-binding activities. The protein is Seminal plasma protein BSP-30 kDa of Bos taurus (Bovine).